Consider the following 315-residue polypeptide: MQEKNVFNWLHKDLLDIDQLSQTDIFNILNTASSLDETNSRVIKKLPTLRGKNIILFFAEPSTRTKVSFEIAGKRLSADTIGVNASSSSIQKGESLKDTALTLQAMSPDVIVLRHSSSGAALFLADLLECSVINAGDGWHAHPTQALLDVFSLWKVWGNHFHGKEVLIVGDTAHSRVCRSNVTLLNLMGVKVRLCSPRTLLPSGVEHWPVEIYTDLHQAICGVDAVICLRVQLERHKKSFFPSIEEYAKRFCLTPKHLMSAKTEAKVLHPGPFLRGVDLASSLIETPQSLIFDQVSAGIAIRMAILFLFLTCNDL.

Arg-64 and Thr-65 together coordinate carbamoyl phosphate. Lys-92 contacts L-aspartate. Arg-114, His-142, and Gln-145 together coordinate carbamoyl phosphate. Residues Arg-176 and Arg-230 each contribute to the L-aspartate site. Positions 271 and 272 each coordinate carbamoyl phosphate.

This sequence belongs to the aspartate/ornithine carbamoyltransferase superfamily. ATCase family. Heterododecamer (2C3:3R2) of six catalytic PyrB chains organized as two trimers (C3), and six regulatory PyrI chains organized as three dimers (R2).

The catalysed reaction is carbamoyl phosphate + L-aspartate = N-carbamoyl-L-aspartate + phosphate + H(+). It functions in the pathway pyrimidine metabolism; UMP biosynthesis via de novo pathway; (S)-dihydroorotate from bicarbonate: step 2/3. In terms of biological role, catalyzes the condensation of carbamoyl phosphate and aspartate to form carbamoyl aspartate and inorganic phosphate, the committed step in the de novo pyrimidine nucleotide biosynthesis pathway. This chain is Aspartate carbamoyltransferase catalytic subunit, found in Lawsonia intracellularis (strain PHE/MN1-00).